A 533-amino-acid chain; its full sequence is CTP synthase (533 aa).

The interval 1–264 (MKYIFVTGGV…GKLVTEKLNL (264 aa)) is amidoligase domain. Ser12 lines the CTP pocket. UTP is bound at residue Ser12. Residues 13–18 (SLGKGI) and Asp70 each bind ATP. The Mg(2+) site is built by Asp70 and Glu138. CTP-binding positions include 145-147 (DIE), 185-190 (KTKPTQ), and Lys221. UTP is bound by residues 185–190 (KTKPTQ) and Lys221. 237–239 (KDA) lines the ATP pocket. The 245-residue stretch at 289–533 (TIGIVGKYIE…HGLVKASIEK (245 aa)) folds into the Glutamine amidotransferase type-1 domain. Position 357 (Gly357) interacts with L-glutamine. Cys384 acts as the Nucleophile; for glutamine hydrolysis in catalysis. L-glutamine contacts are provided by residues 385–388 (LGMQ), Glu407, and Arg464. Residues His509 and Glu511 contribute to the active site.

This sequence belongs to the CTP synthase family. In terms of assembly, homotetramer.

It carries out the reaction UTP + L-glutamine + ATP + H2O = CTP + L-glutamate + ADP + phosphate + 2 H(+). The catalysed reaction is L-glutamine + H2O = L-glutamate + NH4(+). It catalyses the reaction UTP + NH4(+) + ATP = CTP + ADP + phosphate + 2 H(+). It functions in the pathway pyrimidine metabolism; CTP biosynthesis via de novo pathway; CTP from UDP: step 2/2. Allosterically activated by GTP, when glutamine is the substrate; GTP has no effect on the reaction when ammonia is the substrate. The allosteric effector GTP functions by stabilizing the protein conformation that binds the tetrahedral intermediate(s) formed during glutamine hydrolysis. Inhibited by the product CTP, via allosteric rather than competitive inhibition. In terms of biological role, catalyzes the ATP-dependent amination of UTP to CTP with either L-glutamine or ammonia as the source of nitrogen. Regulates intracellular CTP levels through interactions with the four ribonucleotide triphosphates. The chain is CTP synthase from Methanococcus maripaludis (strain DSM 14266 / JCM 13030 / NBRC 101832 / S2 / LL).